A 369-amino-acid polypeptide reads, in one-letter code: Anhydro-N-acetylmuramic acid kinase (369 aa).

Gly-12–Asp-19 contributes to the ATP binding site.

This sequence belongs to the anhydro-N-acetylmuramic acid kinase family.

The enzyme catalyses 1,6-anhydro-N-acetyl-beta-muramate + ATP + H2O = N-acetyl-D-muramate 6-phosphate + ADP + H(+). It participates in amino-sugar metabolism; 1,6-anhydro-N-acetylmuramate degradation. The protein operates within cell wall biogenesis; peptidoglycan recycling. Its function is as follows. Catalyzes the specific phosphorylation of 1,6-anhydro-N-acetylmuramic acid (anhMurNAc) with the simultaneous cleavage of the 1,6-anhydro ring, generating MurNAc-6-P. Is required for the utilization of anhMurNAc either imported from the medium or derived from its own cell wall murein, and thus plays a role in cell wall recycling. This chain is Anhydro-N-acetylmuramic acid kinase, found in Escherichia coli O139:H28 (strain E24377A / ETEC).